The following is a 394-amino-acid chain: 1-deoxy-D-xylulose 5-phosphate reductoisomerase (394 aa).

Residues Thr12, Gly13, Ser14, Ile15, Gly38, Asn41, and Asn132 each contribute to the NADPH site. Residue Lys133 coordinates 1-deoxy-D-xylulose 5-phosphate. Glu134 contributes to the NADPH binding site. Residue Asp156 coordinates Mn(2+). Residues Ser157, Glu158, Ser182, and His205 each contribute to the 1-deoxy-D-xylulose 5-phosphate site. Glu158 is a Mn(2+) binding site. NADPH is bound at residue Gly211. 1-deoxy-D-xylulose 5-phosphate is bound by residues Ser218, Asn223, Lys224, and Glu227. Glu227 serves as a coordination point for Mn(2+).

The protein belongs to the DXR family. Mg(2+) serves as cofactor. It depends on Mn(2+) as a cofactor.

It catalyses the reaction 2-C-methyl-D-erythritol 4-phosphate + NADP(+) = 1-deoxy-D-xylulose 5-phosphate + NADPH + H(+). It functions in the pathway isoprenoid biosynthesis; isopentenyl diphosphate biosynthesis via DXP pathway; isopentenyl diphosphate from 1-deoxy-D-xylulose 5-phosphate: step 1/6. In terms of biological role, catalyzes the NADPH-dependent rearrangement and reduction of 1-deoxy-D-xylulose-5-phosphate (DXP) to 2-C-methyl-D-erythritol 4-phosphate (MEP). This is 1-deoxy-D-xylulose 5-phosphate reductoisomerase from Pseudarthrobacter chlorophenolicus (strain ATCC 700700 / DSM 12829 / CIP 107037 / JCM 12360 / KCTC 9906 / NCIMB 13794 / A6) (Arthrobacter chlorophenolicus).